Reading from the N-terminus, the 459-residue chain is uncharacterized protein (459 aa).

Residues Lys9–Lys67 form the TRAM domain. [4Fe-4S] cluster-binding residues include Cys80, Cys86, Cys89, and Cys168. Gln292, Tyr321, Asp342, and Asp390 together coordinate S-adenosyl-L-methionine. Catalysis depends on Cys417, which acts as the Nucleophile.

The protein belongs to the class I-like SAM-binding methyltransferase superfamily. RNA M5U methyltransferase family.

This is an uncharacterized protein from Bacillus anthracis.